We begin with the raw amino-acid sequence, 311 residues long: Methionyl-tRNA formyltransferase (311 aa).

109–112 (SLLP) is a (6S)-5,6,7,8-tetrahydrofolate binding site.

Belongs to the Fmt family.

The catalysed reaction is L-methionyl-tRNA(fMet) + (6R)-10-formyltetrahydrofolate = N-formyl-L-methionyl-tRNA(fMet) + (6S)-5,6,7,8-tetrahydrofolate + H(+). Functionally, attaches a formyl group to the free amino group of methionyl-tRNA(fMet). The formyl group appears to play a dual role in the initiator identity of N-formylmethionyl-tRNA by promoting its recognition by IF2 and preventing the misappropriation of this tRNA by the elongation apparatus. In Marinobacter nauticus (strain ATCC 700491 / DSM 11845 / VT8) (Marinobacter aquaeolei), this protein is Methionyl-tRNA formyltransferase.